A 304-amino-acid polypeptide reads, in one-letter code: Nucleotide-binding protein KRH_12070 (304 aa).

Residue 27–34 coordinates ATP; the sequence is GMSGAGRS. Residue 78 to 81 participates in GTP binding; it reads DVRG.

The protein belongs to the RapZ-like family.

Displays ATPase and GTPase activities. This Kocuria rhizophila (strain ATCC 9341 / DSM 348 / NBRC 103217 / DC2201) protein is Nucleotide-binding protein KRH_12070.